A 209-amino-acid polypeptide reads, in one-letter code: Large ribosomal subunit protein bL25 (209 aa).

Positions 188–209 are disordered; that stretch reads STSMEKEGEGSQEPTAAPSSEN. A compositionally biased stretch (polar residues) spans 199 to 209; sequence QEPTAAPSSEN.

Belongs to the bacterial ribosomal protein bL25 family. CTC subfamily. As to quaternary structure, part of the 50S ribosomal subunit; part of the 5S rRNA/L5/L18/L25 subcomplex. Contacts the 5S rRNA. Binds to the 5S rRNA independently of L5 and L18.

In terms of biological role, this is one of the proteins that binds to the 5S RNA in the ribosome where it forms part of the central protuberance. The polypeptide is Large ribosomal subunit protein bL25 (Ehrlichia canis (strain Jake)).